Consider the following 427-residue polypeptide: Trigger factor (427 aa).

The region spanning 163-248 (GDTVVIDFVG…IHEVKTKEVP (86 aa)) is the PPIase FKBP-type domain.

This sequence belongs to the FKBP-type PPIase family. Tig subfamily.

It is found in the cytoplasm. The catalysed reaction is [protein]-peptidylproline (omega=180) = [protein]-peptidylproline (omega=0). In terms of biological role, involved in protein export. Acts as a chaperone by maintaining the newly synthesized protein in an open conformation. Functions as a peptidyl-prolyl cis-trans isomerase. The polypeptide is Trigger factor (Streptococcus pyogenes serotype M49 (strain NZ131)).